We begin with the raw amino-acid sequence, 469 residues long: Tetratricopeptide repeat protein 38 (469 aa).

3 TPR repeats span residues 107-140 (REMLHVAAVETFANGNLPKAADLWERILQNHPTD), 179-212 (SYVKGMYSFGLLETNFYDQALKVAKEALAVDQTD), and 251-284 (CHVYWHWALYFIEKGDYEAALTLYDNHIAPQCFA).

The protein belongs to the TTC38 family.

The protein is Tetratricopeptide repeat protein 38 (ttc38) of Xenopus tropicalis (Western clawed frog).